A 206-amino-acid polypeptide reads, in one-letter code: Large ribosomal subunit protein uL4 (206 aa).

Positions G46–T77 are disordered.

The protein belongs to the universal ribosomal protein uL4 family. Part of the 50S ribosomal subunit.

In terms of biological role, one of the primary rRNA binding proteins, this protein initially binds near the 5'-end of the 23S rRNA. It is important during the early stages of 50S assembly. It makes multiple contacts with different domains of the 23S rRNA in the assembled 50S subunit and ribosome. Forms part of the polypeptide exit tunnel. This Acidovorax ebreus (strain TPSY) (Diaphorobacter sp. (strain TPSY)) protein is Large ribosomal subunit protein uL4.